The primary structure comprises 316 residues: uncharacterized protein (316 aa).

This sequence belongs to the asfivirus F317L family.

It is found in the virion. This is an uncharacterized protein from Ornithodoros (relapsing fever ticks).